Here is a 97-residue protein sequence, read N- to C-terminus: uncharacterized protein (97 aa).

This is an uncharacterized protein from Enterobacteria phage T4 (Bacteriophage T4).